A 577-amino-acid chain; its full sequence is Arginine--tRNA ligase (577 aa).

Residues 123 to 133 carry the 'HIGH' region motif; the sequence is PNVAKEMHVGH.

Belongs to the class-I aminoacyl-tRNA synthetase family. In terms of assembly, monomer.

It is found in the cytoplasm. It catalyses the reaction tRNA(Arg) + L-arginine + ATP = L-arginyl-tRNA(Arg) + AMP + diphosphate. The sequence is that of Arginine--tRNA ligase from Cronobacter sakazakii (strain ATCC BAA-894) (Enterobacter sakazakii).